The sequence spans 782 residues: Fibrinogen alpha chain (782 aa).

Residues 1 to 19 (MLSLRVACLILSLASTVWT) form the signal peptide. The stretch at 68-547 (GCRMKGLIDE…KRGRARTMRD (480 aa)) forms a coiled coil. Residues 264-283 (RPGKDGASRGDLPGDSRGDS) show a composition bias toward basic and acidic residues. The disordered stretch occupies residues 264 to 374 (RPGKDGASRG…PATRKEYHTG (111 aa)). S279 is subject to Phosphoserine. Residues 311–323 (SGSGSDGNWGSGT) are compositionally biased toward gly residues. 2 stretches are compositionally biased toward low complexity: residues 324 to 344 (TGSD…SGSG) and 354 to 364 (GEFSEFGGSSS). Position 326 is a phosphoserine (S326). A disulfide bond links C404 and C434. The residue at position 470 (S470) is a Phosphoserine. P499 bears the 4-hydroxyproline; by P4HA1 mark. Basic and acidic residues predominate over residues 522 to 536 (DEAASEAHQEGDTRT). A disordered region spans residues 522-542 (DEAASEAHQEGDTRTTKRGRA). S526 is modified (phosphoserine). Positions 539-780 (RGRARTMRDC…AVRMKIRPLV (242 aa)) constitute a Fibrinogen C-terminal domain. Residue N602 is glycosylated (N-linked (GlcNAc...) asparagine). Ca(2+) contacts are provided by D707, D709, W711, and E713. C715 and C728 are oxidised to a cystine.

As to quaternary structure, heterohexamer; disulfide linked. Contains 2 sets of 3 non-identical chains (alpha, beta and gamma). The 2 heterotrimers are in head to head conformation with the N-termini in a small central domain. Conversion of fibrinogen to fibrin is triggered by thrombin, which cleaves fibrinopeptides A and B from alpha and beta chains, and thus exposes the N-terminal polymerization sites responsible for the formation of the soft clot. The soft clot is converted into the hard clot by factor XIIIA which catalyzes the epsilon-(gamma-glutamyl)lysine cross-linking between gamma chains (stronger) and between alpha chains (weaker) of different monomers. In terms of processing, forms F13A-mediated cross-links between a glutamine and the epsilon-amino group of a lysine residue, forming fibronectin-fibrinogen heteropolymers. Post-translationally, phosphorylated by FAM20C in the extracellular medium.

The protein resides in the secreted. Its function is as follows. Cleaved by the protease thrombin to yield monomers which, together with fibrinogen beta (FGB) and fibrinogen gamma (FGG), polymerize to form an insoluble fibrin matrix. Fibrin has a major function in hemostasis as one of the primary components of blood clots. In addition, functions during the early stages of wound repair to stabilize the lesion and guide cell migration during re-epithelialization. Was originally thought to be essential for platelet aggregation, based on in vitro studies using anticoagulated blood. However, subsequent studies have shown that it is not absolutely required for thrombus formation in vivo. Enhances expression of SELP in activated platelets via an ITGB3-dependent pathway. Maternal fibrinogen is essential for successful pregnancy. Fibrin deposition is also associated with infection, where it protects against IFNG-mediated hemorrhage. May also facilitate the immune response via both innate and T-cell mediated pathways. This Rattus norvegicus (Rat) protein is Fibrinogen alpha chain (Fga).